A 376-amino-acid chain; its full sequence is RING-H2 finger protein ATL46 (376 aa).

The chain crosses the membrane as a helical span at residues 45-65; that stretch reads VLFVIVILAVLFFISGLLHLL. The segment at 143-185 adopts an RING-type; atypical zinc-finger fold; it reads CAVCLCEFSEKDKLRLLPMCSHAFHLNCIDTWLQSNSTCPLCR. Composition is skewed to basic and acidic residues over residues 296–305 and 358–376; these read RLKPQDKESE and DLPK…NDGR. Disordered stretches follow at residues 296 to 320 and 341 to 376; these read RLKP…KINT and FSSD…NDGR.

This sequence belongs to the RING-type zinc finger family. ATL subfamily.

Its subcellular location is the membrane. The catalysed reaction is S-ubiquitinyl-[E2 ubiquitin-conjugating enzyme]-L-cysteine + [acceptor protein]-L-lysine = [E2 ubiquitin-conjugating enzyme]-L-cysteine + N(6)-ubiquitinyl-[acceptor protein]-L-lysine.. It participates in protein modification; protein ubiquitination. The polypeptide is RING-H2 finger protein ATL46 (ATL46) (Arabidopsis thaliana (Mouse-ear cress)).